The following is a 124-amino-acid chain: Ribonuclease pancreatic (124 aa).

Residues Lys-1–Met-13 are compositionally biased toward basic and acidic residues. Positions Lys-1–Asn-24 are disordered. 2 residues coordinate substrate: Lys-7 and Arg-10. The active-site Proton acceptor is the His-12. 4 disulfides stabilise this stretch: Cys-26-Cys-84, Cys-40-Cys-95, Cys-58-Cys-110, and Cys-65-Cys-72. A glycan (N-linked (GlcNAc...) asparagine; partial) is linked at Asn-34. Substrate-binding positions include Lys-41–Thr-45, Lys-66, and Arg-85. The active-site Proton donor is His-119.

The protein belongs to the pancreatic ribonuclease family. Monomer. Interacts with and forms tight 1:1 complexes with RNH1. Dimerization of two such complexes may occur. Interaction with RNH1 inhibits this protein. In terms of tissue distribution, pancreas.

The protein resides in the secreted. It catalyses the reaction an [RNA] containing cytidine + H2O = an [RNA]-3'-cytidine-3'-phosphate + a 5'-hydroxy-ribonucleotide-3'-[RNA].. It carries out the reaction an [RNA] containing uridine + H2O = an [RNA]-3'-uridine-3'-phosphate + a 5'-hydroxy-ribonucleotide-3'-[RNA].. Its function is as follows. Endonuclease that catalyzes the cleavage of RNA on the 3' side of pyrimidine nucleotides. Acts on single-stranded and double-stranded RNA. The sequence is that of Ribonuclease pancreatic (RNASE1) from Aepyceros melampus (Impala).